We begin with the raw amino-acid sequence, 115 residues long: Large ribosomal subunit protein bL19 (115 aa).

The protein belongs to the bacterial ribosomal protein bL19 family.

This protein is located at the 30S-50S ribosomal subunit interface and may play a role in the structure and function of the aminoacyl-tRNA binding site. In Sodalis glossinidius (strain morsitans), this protein is Large ribosomal subunit protein bL19.